Reading from the N-terminus, the 650-residue chain is Fructose-1,6-bisphosphatase class 3 (650 aa).

It belongs to the FBPase class 3 family. It depends on Mn(2+) as a cofactor.

The catalysed reaction is beta-D-fructose 1,6-bisphosphate + H2O = beta-D-fructose 6-phosphate + phosphate. It participates in carbohydrate biosynthesis; gluconeogenesis. This chain is Fructose-1,6-bisphosphatase class 3, found in Staphylococcus saprophyticus subsp. saprophyticus (strain ATCC 15305 / DSM 20229 / NCIMB 8711 / NCTC 7292 / S-41).